The sequence spans 474 residues: Eukaryotic translation initiation factor 3 subunit L (474 aa).

One can recognise a PCI domain in the interval 255 to 449 (DAIRMFSHIL…DLDYALQGDL (195 aa)).

It belongs to the eIF-3 subunit L family. Component of the eukaryotic translation initiation factor 3 (eIF-3) complex.

The protein resides in the cytoplasm. Component of the eukaryotic translation initiation factor 3 (eIF-3) complex, which is involved in protein synthesis of a specialized repertoire of mRNAs and, together with other initiation factors, stimulates binding of mRNA and methionyl-tRNAi to the 40S ribosome. The eIF-3 complex specifically targets and initiates translation of a subset of mRNAs involved in cell proliferation. This is Eukaryotic translation initiation factor 3 subunit L from Chaetomium globosum (strain ATCC 6205 / CBS 148.51 / DSM 1962 / NBRC 6347 / NRRL 1970) (Soil fungus).